The primary structure comprises 384 residues: Alpha-2B adrenergic receptor (384 aa).

A helical transmembrane segment spans residues 1–25; sequence AIAAVITFLILFTIFGNALVILAVL. At 26–36 the chain is on the cytoplasmic side; sequence TSRSLRAPQNL. The chain crosses the membrane as a helical span at residues 37 to 62; it reads FLVSLAAADILVATLIIPFSLANELL. The Extracellular portion of the chain corresponds to 63–72; that stretch reads GYWYFRRTWC. The cysteines at positions 72 and 151 are disulfide-linked. The helical transmembrane segment at 73–95 threads the bilayer; the sequence is EVYLALDVLFCTSSIVHLCAISL. Residues 96-117 lie on the Cytoplasmic side of the membrane; it reads DRYWAVSRALQYNSKRTPRRIK. A helical transmembrane segment spans residues 118–140; the sequence is CVILTVWLIAAAISLPPLIYKGD. Residues 141–156 are Extracellular-facing; sequence QGPQPRGRPQCKLNQE. Residues 157 to 180 traverse the membrane as a helical segment; it reads AWYILSSSIGSFFAPCLIMILVYL. Over 181-348 the chain is Cytoplasmic; that stretch reads RIYLIAKRSN…LTREKRFTFV (168 aa). The tract at residues 192–289 is disordered; it reads RGPRAKGAPR…PEEEEECGSP (98 aa). Residues 218–229 show a composition bias toward polar residues; sequence LANSPTLASSLA. Residues 240–249 are compositionally biased toward basic and acidic residues; it reads PPGEKERETP. A helical membrane pass occupies residues 349–372; that stretch reads LAVVIGVFVLCWFPFFFSYSLGAI. The Extracellular portion of the chain corresponds to 373-381; the sequence is CPQHCKVPH. Residues 382–384 traverse the membrane as a helical segment; that stretch reads GLF.

Belongs to the G-protein coupled receptor 1 family. Adrenergic receptor subfamily. ADRA2B sub-subfamily. Interacts with RAB26. Interacts with PPP1R9B. Interacts with GGA1, GGA2 and GGA3.

Its subcellular location is the cell membrane. Its function is as follows. Alpha-2 adrenergic receptors mediate the catecholamine-induced inhibition of adenylate cyclase through the action of G proteins. This Elephas maximus (Indian elephant) protein is Alpha-2B adrenergic receptor (ADRA2B).